The sequence spans 64 residues: Translation machinery-associated protein 7B (64 aa).

Residues 1–38 (MSSHEGGKKKALKQPKKQAKEMDEEEKAFKQKQKEEQK) are disordered. The span at 27–38 (KAFKQKQKEEQK) shows a compositional bias: basic and acidic residues.

The protein belongs to the TMA7 family.

This is Translation machinery-associated protein 7B from Homo sapiens (Human).